We begin with the raw amino-acid sequence, 226 residues long: Probable septum site-determining protein MinC (226 aa).

The protein belongs to the MinC family. As to quaternary structure, interacts with MinD and FtsZ.

Cell division inhibitor that blocks the formation of polar Z ring septums. Rapidly oscillates between the poles of the cell to destabilize FtsZ filaments that have formed before they mature into polar Z rings. Prevents FtsZ polymerization. This chain is Probable septum site-determining protein MinC, found in Bacillus velezensis (strain DSM 23117 / BGSC 10A6 / LMG 26770 / FZB42) (Bacillus amyloliquefaciens subsp. plantarum).